A 316-amino-acid polypeptide reads, in one-letter code: MAAGVPCALVTSCSATFTGDRLVQHILGTEDAVVEATSSDAVRFYPWTIDNKYYSAEINLCVVPSKFLVTAEIAESVQAFVVYFDSTQKSGLDSVSSWLPLAEAWLAEVMILVCDRVCDDGINRQQAQEWCIKHGFELVELNPEELPEEDDDFPESTGVKRIVQALNANVWSNVVMKSDRSQGFSLLNSLAGANRRVASAESCHSEQQEPSPTAERTESLPGHHSGACGSAGAQVDSIVDPMLDLDIQELASLTTGGGDLENFERLFSKLKEMKDKAATLPHEQRKLHAEKVAKAFWMAIGGDRDEIEGLSSDDEH.

The segment at 198–232 (ASAESCHSEQQEPSPTAERTESLPGHHSGACGSAG) is disordered. Low complexity predominate over residues 222-232 (GHHSGACGSAG). Phosphoserine is present on residues Ser311 and Ser312.

In terms of assembly, associated with AP-1 and AP-2 complexes.

It localises to the cytoplasm. Its subcellular location is the cytosol. In terms of biological role, may be involved in endocytic recycling of growth factor receptors such as EGFR. The polypeptide is Alpha- and gamma-adaptin-binding protein p34 (Aagab) (Mus musculus (Mouse)).